We begin with the raw amino-acid sequence, 653 residues long: MSTTTMNIASAPIEVKRIYWPKSTISYTDSGYLVGWKYSTNDLIVVTTITSYQSFANFLVDYCKNQDQSVDIKSLCILGTFNCSADILPGDKYEIDCWIKVQQSTELSHPRVFDSASTPLKINLHIIYYHPPQPRKMQFLSLEPLSLLLLKDSFINKSNPEYESMQHQQILLKKLKLHFPRRKENSWKRSLRSGLIELLNQSFEVRMLTHENNNKKNSYVFRLFDRVSSSTFYFFNSLFAYFIILLRIINEVILLAINYRPIPLSYNMMDIFVSARQVDLRLQQACFWPVQYMKLWVFRKSKRVAIEDYKEYIRFYNNLWLVANDMIFGITMSSFILENLHLVVKLIENITFEYAIKNVRSMVIWLVDTPAGLKLNNDICKFIMKLSVWVIDVWSNFLLHCLPWTPFLVQVVAISGFGGASLMIALISDFLSVMTIHIHLLYLASSRLYNWQLRVIYSLLQLFRGKKRNVLRNRIDSYEYDLDQLLLGTILFTVLIFFLPTIYVFYAAFALTRVSVMTCLAICETMLAFLNHFPLFVTMLRIKDPYRIPSGLNFEIVSFEPLKQDGFATLYLNCNSKPMSLGSMFEHYRKLARRLISHYLSKTTLISLLVGCPVPAIPAEQLYNIQYAMLPTKRISIRKLRDLLFHQKKFPYD.

Helical transmembrane passes span 43-63, 237-257, 327-347, 382-402, 407-427, 485-505, 520-540, and 605-625; these read LIVV…VDYC, SLFA…LLAI, IFGI…VKLI, FIMK…LHCL, FLVQ…IALI, LLLG…IYVF, LAIC…VTML, and LISL…LYNI.

It localises to the membrane. The protein operates within glycolipid biosynthesis; glycosylphosphatidylinositol-anchor biosynthesis. Necessary for the synthesis of N-acetylglucosaminyl-phosphatidylinositol, the very early intermediate in GPI-anchor biosynthesis. The sequence is that of N-acetylglucosaminyl-phosphatidylinositol biosynthetic protein gpi1 (gpi1) from Schizosaccharomyces pombe (strain 972 / ATCC 24843) (Fission yeast).